A 361-amino-acid polypeptide reads, in one-letter code: Arginine N(omega)-methyltransferase (361 aa).

Residues 1-17 (MRHVQEARAVPAEHEAR) are compositionally biased toward basic and acidic residues. The segment at 1–24 (MRHVQEARAVPAEHEARPAPVTMP) is disordered. Positions 65–361 (DADAFAQIAR…WSDFTLRVSI (297 aa)) constitute an SAM-dependent MTase PRMT-type domain.

It belongs to the class I-like SAM-binding methyltransferase superfamily. Protein arginine N-methyltransferase family.

The enzyme catalyses L-arginine + S-adenosyl-L-methionine = N(omega)-methyl-L-arginine + S-adenosyl-L-homocysteine + H(+). Its pathway is antibiotic biosynthesis. Its function is as follows. Involved in the biosynthesis of the glucosamine-nitrosourea antibiotic streptozotocin (SZN). Catalyzes the conversion of L-arginine to N(omega)-methyl-L-arginine (L-NMA), using S-adenosyl-L-methionine (SAM) as a methyl donor. The chain is Arginine N(omega)-methyltransferase from Streptomyces achromogenes subsp. streptozoticus.